Here is a 2603-residue protein sequence, read N- to C-terminus: Ankyrin repeat domain-containing protein 17 (2603 aa).

Position 1 is an N-acetylmethionine (Met-1). Residues Met-1–Glu-32 show a composition bias toward low complexity. The interval Met-1–Glu-127 is disordered. Phosphoserine occurs at positions 15 and 42. Residues Pro-68–Thr-77 are compositionally biased toward basic residues. Over residues Ser-82–Asn-92 the composition is skewed to low complexity. The span at Ser-93 to Thr-107 shows a compositional bias: gly residues. Positions Ser-112–Glu-127 are enriched in acidic residues. Phosphoserine is present on Ser-152. 15 ANK repeats span residues Ser-229–Glu-258, Glu-262–Asp-291, Gly-296–Ala-325, Thr-329–Asp-358, Asn-362–Thr-391, Phe-396–His-425, Glu-429–Met-458, Ser-462–Glu-491, Glu-495–Ala-524, Thr-529–Leu-558, Gly-559–Ala-588, Thr-592–His-621, Gly-625–Arg-654, Asn-659–His-688, and Asp-692–Ala-721. Lys-314 participates in a covalent cross-link: Glycyl lysine isopeptide (Lys-Gly) (interchain with G-Cter in SUMO2). The disordered stretch occupies residues Val-770–Gln-792. Polar residues predominate over residues Ala-775–Gln-792. Ser-799 carries the phosphoserine modification. ANK repeat units follow at residues Asn-1078–His-1107, Lys-1111–Ala-1140, Thr-1145–His-1174, Ser-1178–Ser-1207, Leu-1213–Ala-1242, Asn-1247–His-1276, Thr-1280–Ala-1309, Ser-1315–Val-1344, Lys-1348–Ala-1377, and Arg-1381–Ser-1410. The stretch at Val-1438–Glu-1522 forms a coiled coil. Ser-1453 bears the Phosphoserine mark. Disordered stretches follow at residues Ala-1475–Glu-1496 and Glu-1513–Glu-1713. Basic residues predominate over residues Arg-1477–Lys-1487. Composition is skewed to low complexity over residues Leu-1526–Thr-1546, Glu-1598–Ser-1607, and Ser-1616–Ser-1636. A Phosphoserine modification is found at Ser-1631. 2 stretches are compositionally biased toward polar residues: residues Val-1638–Gln-1648 and Leu-1671–Gly-1699. Ser-1692, Ser-1696, and Ser-1705 each carry phosphoserine. A KH domain is found at Arg-1721–Ile-1785. At Arg-1870 the chain carries Asymmetric dimethylarginine. Disordered regions lie at residues Pro-1902 to Arg-1991, Thr-2007 to Ala-2195, and Val-2269 to Val-2327. Composition is skewed to low complexity over residues Ser-1946–Ser-1989 and Thr-2007–Thr-2024. A phosphoserine mark is found at Ser-2038, Ser-2040, Ser-2041, Ser-2043, Ser-2055, and Ser-2063. 3 stretches are compositionally biased toward low complexity: residues Ala-2068 to Ser-2077, Arg-2087 to Pro-2108, and Pro-2175 to Pro-2189. Over residues Val-2269–Ser-2298 the composition is skewed to polar residues. Over residues Phe-2303–Ser-2313 the composition is skewed to pro residues. Ser-2373 carries the phosphoserine modification. Residues Leu-2378–Gly-2447 are disordered. Polar residues predominate over residues Thr-2379 to Gln-2391. Residues Ser-2392 to Ser-2411 are compositionally biased toward low complexity. Ser-2401 carries the post-translational modification Phosphoserine. Polar residues predominate over residues Ile-2435–Gly-2447.

As to quaternary structure, interacts (via N-terminus) with NOD2. Interacts with CDK2, MCM3, MCM5, MCM7, CDC6 and PCNA. Interacts with MAVS and IFIH1. Interacts (via the second ankyrin repeat cluster) with RIGI. In terms of processing, phosphorylated by CDK2. As to expression, highly expressed in fetal liver. Detected in adult liver cells, ovarian oocytes, seminiferous tubules of the testes and pelvic region of the kidney. It was not detected in heart, gut, lung, spleen and skeletal muscle. Earliest specific in situ marker of hepatic differentiation during embryogenesis, useful for characterization of inductive events involved in hepatic specification.

It is found in the cytoplasm. The protein resides in the nucleus. Could play pivotal roles in cell cycle and DNA regulation. Involved in innate immune defense against viruse by positively regulating the viral dsRNA receptors RIGI and IFIH1 signaling pathways. Involves in NOD2- and NOD1-mediated responses to bacteria suggesting a role in innate antibacterial immune pathways too. Could play a central role for the formation and/or maintenance of the blood vessels of the circulation system. The polypeptide is Ankyrin repeat domain-containing protein 17 (Ankrd17) (Mus musculus (Mouse)).